The following is a 275-amino-acid chain: MAVKKFKPTSPGIRQMTVASFDEITKTKPEKSLLEPLKKKAGRNNQGKLTVRHQGGGHKRMYRVIDFKRIKDGIPAKVASIEYDPNRTSRIALLHYADGEKRYIIAPNGLNVGDTVVSGPDADIKTGNCLPLKNIPVGTLIHCIEMRPGKGGQLVRSAGAAAQLMAKEGEHATLRLPSGEMRKVLAECRATIGQMGNLEHENITIGKAGRKRWLGIRPTVRGVVMNPVDHPHGGGEGRSPIGRKAPVTPWGKVAIGGKTRRKKASDKLIIKRRTK.

The interval Val224 to Gly251 is disordered.

This sequence belongs to the universal ribosomal protein uL2 family. Part of the 50S ribosomal subunit. Forms a bridge to the 30S subunit in the 70S ribosome.

One of the primary rRNA binding proteins. Required for association of the 30S and 50S subunits to form the 70S ribosome, for tRNA binding and peptide bond formation. It has been suggested to have peptidyltransferase activity; this is somewhat controversial. Makes several contacts with the 16S rRNA in the 70S ribosome. This is Large ribosomal subunit protein uL2 from Heliobacterium modesticaldum (strain ATCC 51547 / Ice1).